The chain runs to 1228 residues: P3N-PIPO polyprotein (1228 aa).

The Peptidase S30 domain occupies 408-547 (IVGNSKINYI…RSVYAKMDQY (140 aa)). Residues His456, Asp465, and Ser499 each act as for P1 proteinase activity in the active site. An Involved in interaction with stylet and aphid transmission motif is present at residues 598-601 (KITC). The short motif at 856–858 (PTK) is the Involved in virions binding and aphid transmission element. Positions 882 to 1004 (MYIAKKGYCY…DSEMKHYIVG (123 aa)) constitute a Peptidase C6 domain. Residues Cys890 and His963 each act as for helper component proteinase activity in the active site.

The protein belongs to the potyviridae P3N-PIPO polyprotein family. Interacts (via PIPO domain) with host PCaP1 protein; this interaction may help to anchor the movement complex to the plasma membrane from which the complex could move to the plasmodesmata. In terms of processing, potyviral RNA is expressed as two polyproteins which undergo post-translational proteolytic processing. Genome polyprotein is processed by NIa-pro, P1 and HC-pro proteinases resulting in the production of at least ten individual proteins. P3N-PIPO is cleaved by P1 and HC-pro proteinases resulting in the production of three individual proteins. The P1 proteinase and the HC-pro cleave only their respective C-termini autocatalytically.

It localises to the host cell junction. The protein resides in the host plasmodesma. It catalyses the reaction Hydrolyzes a Gly-|-Gly bond at its own C-terminus, commonly in the sequence -Tyr-Xaa-Val-Gly-|-Gly, in the processing of the potyviral polyprotein.. Its function is as follows. Required for aphid transmission and also has proteolytic activity. Only cleaves a Gly-Gly dipeptide at its own C-terminus. Interacts with virions and aphid stylets. Acts as a suppressor of RNA-mediated gene silencing, also known as post-transcriptional gene silencing (PTGS), a mechanism of plant viral defense that limits the accumulation of viral RNAs. May have RNA-binding activity. In terms of biological role, allows efficient cell to cell propagation, by bypassing the host cell wall barrier. Transports viral genome to neighboring plant cells directly through plasmosdesmata, without any budding. This is P3N-PIPO polyprotein from Carica papaya (Papaya).